Here is a 288-residue protein sequence, read N- to C-terminus: Polyamine aminopropyltransferase (288 aa).

Residues Glu-9–Asp-238 enclose the PABS domain. Gln-33 lines the S-methyl-5'-thioadenosine pocket. Positions 64 and 88 each coordinate spermidine. S-methyl-5'-thioadenosine is bound by residues Glu-108 and Asp-140–Gly-141. Asp-158 functions as the Proton acceptor in the catalytic mechanism. Asp-158–Asp-161 contributes to the spermidine binding site. Pro-165 serves as a coordination point for S-methyl-5'-thioadenosine.

The protein belongs to the spermidine/spermine synthase family. Homodimer or homotetramer.

The protein localises to the cytoplasm. It carries out the reaction S-adenosyl 3-(methylsulfanyl)propylamine + putrescine = S-methyl-5'-thioadenosine + spermidine + H(+). The protein operates within amine and polyamine biosynthesis; spermidine biosynthesis; spermidine from putrescine: step 1/1. In terms of biological role, catalyzes the irreversible transfer of a propylamine group from the amino donor S-adenosylmethioninamine (decarboxy-AdoMet) to putrescine (1,4-diaminobutane) to yield spermidine. This Escherichia coli (strain ATCC 8739 / DSM 1576 / NBRC 3972 / NCIMB 8545 / WDCM 00012 / Crooks) protein is Polyamine aminopropyltransferase.